We begin with the raw amino-acid sequence, 756 residues long: Catalase-peroxidase (756 aa).

The segment at residues 91–244 is a cross-link (tryptophyl-tyrosyl-methioninium (Trp-Tyr) (with M-270)); that stretch reads WHSAGTYRTG…LAAVQMGLIY (154 aa). Catalysis depends on His92, which acts as the Proton acceptor. The tract at residues 198-230 is disordered; that stretch reads AQKKMQQPGDGTLVAEPENHANEESRTASGERN. Basic and acidic residues predominate over residues 214 to 223; it reads PENHANEESR. Residues 244–270 constitute a cross-link (tryptophyl-tyrosyl-methioninium (Tyr-Met) (with W-91)); sequence YVNPEGPEGVPDPVASARDIRETFGRM. His285 lines the heme b pocket. Residues 371 to 390 are disordered; it reads KNGAGAGKIPDAHDPSKRHA.

The protein belongs to the peroxidase family. Peroxidase/catalase subfamily. In terms of assembly, homodimer or homotetramer. Heme b serves as cofactor. In terms of processing, formation of the three residue Trp-Tyr-Met cross-link is important for the catalase, but not the peroxidase activity of the enzyme.

It carries out the reaction H2O2 + AH2 = A + 2 H2O. The catalysed reaction is 2 H2O2 = O2 + 2 H2O. Bifunctional enzyme with both catalase and broad-spectrum peroxidase activity. The polypeptide is Catalase-peroxidase (Pseudomonas syringae pv. tomato (strain ATCC BAA-871 / DC3000)).